The chain runs to 343 residues: Protein RecA (343 aa).

An ATP-binding site is contributed by 66 to 73; that stretch reads GPESSGKT.

Belongs to the RecA family.

The protein localises to the cytoplasm. Can catalyze the hydrolysis of ATP in the presence of single-stranded DNA, the ATP-dependent uptake of single-stranded DNA by duplex DNA, and the ATP-dependent hybridization of homologous single-stranded DNAs. It interacts with LexA causing its activation and leading to its autocatalytic cleavage. The chain is Protein RecA from Rickettsia massiliae (strain Mtu5).